We begin with the raw amino-acid sequence, 300 residues long: 4-diphosphocytidyl-2-C-methyl-D-erythritol kinase (300 aa).

Residue lysine 12 is part of the active site. Position 94–104 (94–104) interacts with ATP; that stretch reads PAQAGIGGGSS. Residue aspartate 136 is part of the active site.

The protein belongs to the GHMP kinase family. IspE subfamily.

The catalysed reaction is 4-CDP-2-C-methyl-D-erythritol + ATP = 4-CDP-2-C-methyl-D-erythritol 2-phosphate + ADP + H(+). It participates in isoprenoid biosynthesis; isopentenyl diphosphate biosynthesis via DXP pathway; isopentenyl diphosphate from 1-deoxy-D-xylulose 5-phosphate: step 3/6. Functionally, catalyzes the phosphorylation of the position 2 hydroxy group of 4-diphosphocytidyl-2C-methyl-D-erythritol. This chain is 4-diphosphocytidyl-2-C-methyl-D-erythritol kinase, found in Verminephrobacter eiseniae (strain EF01-2).